Here is a 120-residue protein sequence, read N- to C-terminus: Glycine cleavage system H protein (120 aa).

A Lipoyl-binding domain is found at 19 to 101 (DGTVGISDFA…YTDGWLFRLD (83 aa)). Lys60 bears the N6-lipoyllysine mark.

The protein belongs to the GcvH family. In terms of assembly, the glycine cleavage system is composed of four proteins: P, T, L and H. Requires (R)-lipoate as cofactor.

Its function is as follows. The glycine cleavage system catalyzes the degradation of glycine. The H protein shuttles the methylamine group of glycine from the P protein to the T protein. The sequence is that of Glycine cleavage system H protein from Deinococcus geothermalis (strain DSM 11300 / CIP 105573 / AG-3a).